The chain runs to 304 residues: MATH domain and coiled-coil domain-containing protein At2g42470 (304 aa).

In terms of domain architecture, MATH spans 6–123; that stretch reads QTSFTFEIDN…NNKLIIEVQV (118 aa). Residues 219–292 are a coiled coil; it reads FKVDWLKKKL…LKIELDRTRR (74 aa).

This is MATH domain and coiled-coil domain-containing protein At2g42470 from Arabidopsis thaliana (Mouse-ear cress).